The chain runs to 405 residues: GTPase Obg (405 aa).

The region spanning 1–159 is the Obg domain; it reads MKFVDEVSIF…RDLKLELKVL (159 aa). Residues 127-148 are disordered; the sequence is NTRFKSSTNRAPRQTTPGKPGD. The segment covering 129–143 has biased composition (polar residues); sequence RFKSSTNRAPRQTTP. The region spanning 160 to 333 is the OBG-type G domain; the sequence is ADVGLLGLPN…LSQAIMRYLD (174 aa). GTP-binding positions include 166-173, 191-195, 213-216, 283-286, and 314-316; these read GLPNAGKS, FTTLV, DIPG, NKAD, and SAL. Residues Ser-173 and Thr-193 each coordinate Mg(2+). The tract at residues 373–405 is disordered; sequence LRRAGVKSVEEADDDDFDDDDDDEGGAEIIYVR. Residues 383–398 are compositionally biased toward acidic residues; sequence EADDDDFDDDDDDEGG.

Belongs to the TRAFAC class OBG-HflX-like GTPase superfamily. OBG GTPase family. As to quaternary structure, monomer. The cofactor is Mg(2+).

It localises to the cytoplasm. An essential GTPase which binds GTP, GDP and possibly (p)ppGpp with moderate affinity, with high nucleotide exchange rates and a fairly low GTP hydrolysis rate. Plays a role in control of the cell cycle, stress response, ribosome biogenesis and in those bacteria that undergo differentiation, in morphogenesis control. The polypeptide is GTPase Obg (Stutzerimonas stutzeri (strain A1501) (Pseudomonas stutzeri)).